Here is a 407-residue protein sequence, read N- to C-terminus: uncharacterized protein (407 aa).

Residues 10 to 37 (DKLEQLANDVVTELTDMENKYKDLHVEL) adopt a coiled-coil conformation.

This is an uncharacterized protein from Bacillus subtilis (strain 168).